A 22-amino-acid polypeptide reads, in one-letter code: Leptoglycin (22 aa).

Residues 1-22 (GLLGGLLGPLLGGGGGGGGGLL) form a disordered region.

In terms of tissue distribution, expressed by the skin glands.

It is found in the secreted. Antimicrobial protein. Has antibacterial activity against the Gram-negative bacteria E.coli ATCC 28922 (MIC=50 uM), P.aeruginosa ATCC 9027 (MIC=8 uM) and C.freundii ATCC 8090 (MIC=75 uM). Does not have hemolytic activity. In Leptodactylus pentadactylus (Smokey jungle frog), this protein is Leptoglycin.